Here is a 102-residue protein sequence, read N- to C-terminus: Iron-sulfur cluster assembly protein CyaY (102 aa).

It belongs to the frataxin family.

Functionally, involved in iron-sulfur (Fe-S) cluster assembly. May act as a regulator of Fe-S biogenesis. The protein is Iron-sulfur cluster assembly protein CyaY of Histophilus somni (strain 129Pt) (Haemophilus somnus).